Reading from the N-terminus, the 403-residue chain is MALRLTRNSQLAAENRTSLAGKGMAAKPALRPRAVLGEIGNKTAAPRPLLKKETKPEITKVVQRKPIKVEKAPEVQLPKRNAAKKLEEKVTLPVVPEPASPTPMETSGCASDDLCQAFSDVLLNIKDVDADDYDNPMLCSEYIKDIYKYLRQLEVDQAVRPKYLEGQEVTGNMRAILIDWLVQVQVKFRLLQETMYMTVGIIDRFLQDNPVPKKQLQLVGVTAMFLASKYEEMYPPEIADFAFVTDRAYTTAQIRDMEMKILRVLNFSFGRPLPLQFLRRASKIGEVTAEHHTLAKYFMELTMVDYEMVHFPPSLVASAAFALSLKVFDCGEWTPTLQYYMDYTEACLIPVMQHIAKNVVKVNEGHTKHMAVKNKYGSQKQMRISHLPQLKSSVIKDLAKQLS.

The protein belongs to the cyclin family. Cyclin AB subfamily. In terms of assembly, interacts with the CDC2 protein kinase to form a serine/threonine kinase holoenzyme complex also known as maturation promoting factor (MPF). The cyclin subunit imparts substrate specificity to the complex.

In terms of biological role, essential for the control of the cell cycle at the G2/M (mitosis) transition. The protein is G2/mitotic-specific cyclin-B1 (ccnb1) of Anguilla japonica (Japanese eel).